A 1362-amino-acid chain; its full sequence is DNA-directed RNA polymerase subunit beta (1362 aa).

This sequence belongs to the RNA polymerase beta chain family. As to quaternary structure, the RNAP catalytic core consists of 2 alpha, 1 beta, 1 beta' and 1 omega subunit. When a sigma factor is associated with the core the holoenzyme is formed, which can initiate transcription.

The enzyme catalyses RNA(n) + a ribonucleoside 5'-triphosphate = RNA(n+1) + diphosphate. DNA-dependent RNA polymerase catalyzes the transcription of DNA into RNA using the four ribonucleoside triphosphates as substrates. This is DNA-directed RNA polymerase subunit beta from Acinetobacter baumannii (strain AB307-0294).